A 138-amino-acid chain; its full sequence is Basic phospholipase A2 myotoxin I (138 aa).

The N-terminal stretch at 1–16 is a signal peptide; sequence MRTLWIMAVLLVGVEG. 7 cysteine pairs are disulfide-bonded: C42–C131, C44–C60, C59–C111, C65–C138, C66–C104, C73–C97, and C91–C102. Positions 43, 45, and 47 each coordinate Ca(2+). Residue H63 is part of the active site. D64 is a Ca(2+) binding site. D105 is an active-site residue.

Belongs to the phospholipase A2 family. Group II subfamily. D49 sub-subfamily. As to quaternary structure, monomer. Homodimer; non-covalently linked (alternative/compact dimer conformation). Ca(2+) serves as cofactor. As to expression, expressed by the venom gland.

Its subcellular location is the secreted. It carries out the reaction a 1,2-diacyl-sn-glycero-3-phosphocholine + H2O = a 1-acyl-sn-glycero-3-phosphocholine + a fatty acid + H(+). Its activity is regulated as follows. High level of membrane cholesterol content reduces cytolytic activity, whereas low level of membrane cholesterol content increases cytolytic activity. In terms of biological role, snake venom phospholipase A2 (PLA2) that displays local myotoxic activity. It also displays anticoagulant action in plasma and edema-inducing activities. In addition, it shows cytotoxic activity to a variety of cell types and bactericidal activity to a variety of Gram-negative and Gram-positive bacteria. PLA2 catalyzes the calcium-dependent hydrolysis of the 2-acyl groups in 3-sn-phosphoglycerides. The protein is Basic phospholipase A2 myotoxin I of Bothrops asper (Terciopelo).